The primary structure comprises 732 residues: 1,4-alpha-glucan branching enzyme GlgB (732 aa).

The active-site Nucleophile is Asp415. Glu468 acts as the Proton donor in catalysis.

This sequence belongs to the glycosyl hydrolase 13 family. GlgB subfamily. As to quaternary structure, monomer.

It carries out the reaction Transfers a segment of a (1-&gt;4)-alpha-D-glucan chain to a primary hydroxy group in a similar glucan chain.. It functions in the pathway glycan biosynthesis; glycogen biosynthesis. Catalyzes the formation of the alpha-1,6-glucosidic linkages in glycogen by scission of a 1,4-alpha-linked oligosaccharide from growing alpha-1,4-glucan chains and the subsequent attachment of the oligosaccharide to the alpha-1,6 position. This Nitrosomonas eutropha (strain DSM 101675 / C91 / Nm57) protein is 1,4-alpha-glucan branching enzyme GlgB.